A 198-amino-acid polypeptide reads, in one-letter code: Nucleoid occlusion factor SlmA (198 aa).

Residues 9–70 (RNRREEILQA…SLIEFIEDSL (62 aa)) enclose the HTH tetR-type domain. The segment at residues 33-52 (TTAKLAANVGVSEAALYRHF) is a DNA-binding region (H-T-H motif). Residues 119 to 144 (DRLQGRINQLFERIEMQLRQVLREKK) adopt a coiled-coil conformation.

The protein belongs to the nucleoid occlusion factor SlmA family. In terms of assembly, homodimer. Interacts with FtsZ.

The protein localises to the cytoplasm. It is found in the nucleoid. Functionally, required for nucleoid occlusion (NO) phenomenon, which prevents Z-ring formation and cell division over the nucleoid. Acts as a DNA-associated cell division inhibitor that binds simultaneously chromosomal DNA and FtsZ, and disrupts the assembly of FtsZ polymers. SlmA-DNA-binding sequences (SBS) are dispersed on non-Ter regions of the chromosome, preventing FtsZ polymerization at these regions. The chain is Nucleoid occlusion factor SlmA from Yersinia pseudotuberculosis serotype I (strain IP32953).